The sequence spans 452 residues: UDP-N-acetylmuramoylalanine--D-glutamate ligase (452 aa).

ATP is bound at residue 115–121 (GTNGKTT).

It belongs to the MurCDEF family.

It localises to the cytoplasm. The catalysed reaction is UDP-N-acetyl-alpha-D-muramoyl-L-alanine + D-glutamate + ATP = UDP-N-acetyl-alpha-D-muramoyl-L-alanyl-D-glutamate + ADP + phosphate + H(+). The protein operates within cell wall biogenesis; peptidoglycan biosynthesis. Functionally, cell wall formation. Catalyzes the addition of glutamate to the nucleotide precursor UDP-N-acetylmuramoyl-L-alanine (UMA). This is UDP-N-acetylmuramoylalanine--D-glutamate ligase from Geobacter sp. (strain M21).